Reading from the N-terminus, the 364-residue chain is N-alpha-acetyltransferase 30 (364 aa).

Pro residues predominate over residues M1–A18. Disordered stretches follow at residues M1 to A21, S39 to K65, and E110 to A164. A phosphoserine mark is found at S39 and S54. A compositionally biased stretch (acidic residues) spans S39–H48. Over residues A126–P135 the composition is skewed to basic and acidic residues. A compositionally biased stretch (low complexity) spans A152–A164. A phosphoserine mark is found at S192, S198, and S201. One can recognise an N-acetyltransferase domain in the interval R216 to R364. K235 carries the post-translational modification N6-acetyllysine.

The protein belongs to the acetyltransferase family. MAK3 subfamily. Component of the N-terminal acetyltransferase C (NatC) complex, which is composed of NAA35, NAA38 and NAA30.

The protein resides in the cytoplasm. It localises to the nucleus. It carries out the reaction N-terminal L-methionyl-L-leucyl-[protein] + acetyl-CoA = N-terminal N(alpha)-acetyl-L-methionyl-L-leucyl-[protein] + CoA + H(+). The enzyme catalyses N-terminal L-methionyl-L-isoleucyl-[protein] + acetyl-CoA = N-terminal N(alpha)-acetyl-L-methionyl-L-isoleucyl-[protein] + CoA + H(+). The catalysed reaction is N-terminal L-methionyl-L-phenylalanyl-[protein] + acetyl-CoA = N-terminal N(alpha)-acetyl-L-methionyl-L-phenylalanyl-[protein] + CoA + H(+). It catalyses the reaction N-terminal L-methionyl-L-tryptophyl-[protein] + acetyl-CoA = N-terminal N(alpha)-acetyl-L-methionyl-L-tryptophyl-[protein] + CoA + H(+). It carries out the reaction N-terminal L-methionyl-L-tyrosyl-[protein] + acetyl-CoA = N-terminal N(alpha)-acetyl-L-methionyl-L-tyrosyl-[protein] + CoA + H(+). Its function is as follows. Catalytic subunit of the N-terminal acetyltransferase C (NatC) complex. Catalyzes acetylation of the N-terminal methionine residues of peptides beginning with Met-Leu-Ala and Met-Leu-Gly. N-terminal acetylation protects proteins from ubiquitination and degradation by the N-end rule pathway. Necessary for the lysosomal localization and function of ARL8B sugeesting that ARL8B is a NatC substrate. This is N-alpha-acetyltransferase 30 (Naa30) from Mus musculus (Mouse).